Here is a 99-residue protein sequence, read N- to C-terminus: Cobalt transport protein CbiN (99 aa).

Transmembrane regions (helical) follow at residues 6–26 and 68–88; these read VLMIIGIIILTIAPLVMYSGL and SLLFALQAAIGAIIIGYFFGY.

Belongs to the CbiN family. In terms of assembly, forms an energy-coupling factor (ECF) transporter complex composed of an ATP-binding protein (A component, CbiO), a transmembrane protein (T component, CbiQ) and 2 possible substrate-capture proteins (S components, CbiM and CbiN) of unknown stoichimetry.

The protein resides in the cell membrane. It functions in the pathway cofactor biosynthesis; adenosylcobalamin biosynthesis. In terms of biological role, part of the energy-coupling factor (ECF) transporter complex CbiMNOQ involved in cobalt import. The polypeptide is Cobalt transport protein CbiN (Methanococcus vannielii (strain ATCC 35089 / DSM 1224 / JCM 13029 / OCM 148 / SB)).